The primary structure comprises 356 residues: MIETDKLATEQRIIAATPASSHEEVFERALRPRQLDDYVGQEKVRGQLEIFIEAAKRRSEPLDHVLLFGPPGLGKTTLAHIIAREMGVNLRQTSGPVLERAGDLAALLTNLEANDVLFIDEIHRLSPVVEEILYPALEDYQIDIMIGEGPAARSVKLDLQPFTLVGATTRAGMLTNPLRDRFGIVARLEFYDADQLSRIVRRSASLLNAQIDPNGALEIAKRSRGTPRIANRLLRRVRDFAEVKADGQITAAVADAALAMLDVDPVGFDLMDRKLLEAILYKFDGGPVGIDNLAAAIGEERDTIEDVLEPYLIQQGFLQRTPRGRVATLLTYRHFGLSVPDARRPERDEWDTPDGK.

Residues 4–191 (TDKLATEQRI…FGIVARLEFY (188 aa)) are large ATPase domain (RuvB-L). ATP-binding positions include L30, R31, G72, K75, T76, T77, 138–140 (EDY), R181, Y191, and R228. T76 serves as a coordination point for Mg(2+). The segment at 192-262 (DADQLSRIVR…VADAALAMLD (71 aa)) is small ATPAse domain (RuvB-S). Residues 265–356 (PVGFDLMDRK…RDEWDTPDGK (92 aa)) are head domain (RuvB-H). DNA-binding residues include R301, R320, and R325.

This sequence belongs to the RuvB family. Homohexamer. Forms an RuvA(8)-RuvB(12)-Holliday junction (HJ) complex. HJ DNA is sandwiched between 2 RuvA tetramers; dsDNA enters through RuvA and exits via RuvB. An RuvB hexamer assembles on each DNA strand where it exits the tetramer. Each RuvB hexamer is contacted by two RuvA subunits (via domain III) on 2 adjacent RuvB subunits; this complex drives branch migration. In the full resolvosome a probable DNA-RuvA(4)-RuvB(12)-RuvC(2) complex forms which resolves the HJ.

The protein resides in the cytoplasm. The enzyme catalyses ATP + H2O = ADP + phosphate + H(+). Its function is as follows. The RuvA-RuvB-RuvC complex processes Holliday junction (HJ) DNA during genetic recombination and DNA repair, while the RuvA-RuvB complex plays an important role in the rescue of blocked DNA replication forks via replication fork reversal (RFR). RuvA specifically binds to HJ cruciform DNA, conferring on it an open structure. The RuvB hexamer acts as an ATP-dependent pump, pulling dsDNA into and through the RuvAB complex. RuvB forms 2 homohexamers on either side of HJ DNA bound by 1 or 2 RuvA tetramers; 4 subunits per hexamer contact DNA at a time. Coordinated motions by a converter formed by DNA-disengaged RuvB subunits stimulates ATP hydrolysis and nucleotide exchange. Immobilization of the converter enables RuvB to convert the ATP-contained energy into a lever motion, pulling 2 nucleotides of DNA out of the RuvA tetramer per ATP hydrolyzed, thus driving DNA branch migration. The RuvB motors rotate together with the DNA substrate, which together with the progressing nucleotide cycle form the mechanistic basis for DNA recombination by continuous HJ branch migration. Branch migration allows RuvC to scan DNA until it finds its consensus sequence, where it cleaves and resolves cruciform DNA. The chain is Holliday junction branch migration complex subunit RuvB from Burkholderia cenocepacia (strain ATCC BAA-245 / DSM 16553 / LMG 16656 / NCTC 13227 / J2315 / CF5610) (Burkholderia cepacia (strain J2315)).